Reading from the N-terminus, the 313-residue chain is Peroxidase 57 (313 aa).

Positions 1–22 (MMKGAKFSSLLVLFFIFPIAFA) are cleaved as a signal peptide. Disulfide bonds link Cys33/Cys109, Cys66/Cys71, Cys115/Cys309, and Cys192/Cys224. Catalysis depends on His64, which acts as the Proton acceptor. Asp65, Val68, Gly70, Asp72, and Ser74 together coordinate Ca(2+). Pro155 contacts substrate. His185 is a heme b binding site. A Ca(2+)-binding site is contributed by Thr186. Ca(2+)-binding residues include Asp233, Ser236, and Asp241.

This sequence belongs to the peroxidase family. Classical plant (class III) peroxidase subfamily. It depends on heme b as a cofactor. Ca(2+) serves as cofactor. In terms of tissue distribution, mainly expressed in roots.

The protein localises to the secreted. The enzyme catalyses 2 a phenolic donor + H2O2 = 2 a phenolic radical donor + 2 H2O. Removal of H(2)O(2), oxidation of toxic reductants, biosynthesis and degradation of lignin, suberization, auxin catabolism, response to environmental stresses such as wounding, pathogen attack and oxidative stress. These functions might be dependent on each isozyme/isoform in each plant tissue. The protein is Peroxidase 57 (PER57) of Arabidopsis thaliana (Mouse-ear cress).